Consider the following 470-residue polypeptide: MNPNQKIITIGSICMTIGIISLILQIGNIISIWVSHSIQTGSQNHTGICNQRIITYENSTWVNQTYVNINNTNVVAGKDTTSVTLAGNSSLCPIRGWAIYSKDNSIRIGSKGDVFVIREPFISCSHLECRTFFLTQGALLNDKHSNGTVKDRSPYRALMSCPIGEAPSPYNSRFESVAWSASACHDGMGWLTIGISGPDDGAVAVLKYNGIITETIKSWRKRILRTQESECVCVNGSCFTIMTDGPSNGPASYRIFKIEKGKITKSIELDAPNSHYEECSCYPDTGTVMCVCRDNWHGSNRPWVSFNQNLDYQIGYICSGVFGDNPRPKDGKGSCDPVTVDGADGVKGFSYRYGNGVWIGRTKSNSSRKGFEMIWDPNGWTDTDSNFLVKQDVVAMTDWSGYSGSFVQHPELTGLDCMRPCFWVELIRGRPREKTTIWTSGSSISFCGVNSDTANWSWPDGAELPFTIDK.

At 1–6 (MNPNQK) the chain is on the intravirion side. A helical transmembrane segment spans residues 7–27 (IITIGSICMTIGIISLILQIG). An involved in apical transport and lipid raft association region spans residues 11–33 (GSICMTIGIISLILQIGNIISIW). The Virion surface portion of the chain corresponds to 28–470 (NIISIWVSHS…GAELPFTIDK (443 aa)). Residues 36–90 (HSIQTGSQNHTGICNQRIITYENSTWVNQTYVNINNTNVVAGKDTTSVTLAGNSS) form a hypervariable stalk region region. Asn-44, Asn-58, Asn-63, Asn-70, and Asn-88 each carry an N-linked (GlcNAc...) asparagine; by host glycan. The interval 91–470 (LCPIRGWAIY…GAELPFTIDK (380 aa)) is head of neuraminidase. Intrachain disulfides connect Cys-92–Cys-417, Cys-124–Cys-129, Cys-184–Cys-231, Cys-233–Cys-238, Cys-279–Cys-292, Cys-281–Cys-290, Cys-318–Cys-335, and Cys-421–Cys-447. Arg-118 serves as a coordination point for substrate. A glycan (N-linked (GlcNAc...) asparagine; by host) is linked at Asn-146. The active-site Proton donor/acceptor is the Asp-151. Arg-152 lines the substrate pocket. N-linked (GlcNAc...) asparagine; by host glycosylation occurs at Asn-235. Substrate is bound at residue 277–278 (EE). Residue Arg-293 participates in substrate binding. Asp-294, Gly-298, and Asp-324 together coordinate Ca(2+). N-linked (GlcNAc...) asparagine; by host glycosylation occurs at Asn-365. Arg-368 contributes to the substrate binding site. Tyr-402 acts as the Nucleophile in catalysis. An N-linked (GlcNAc...) asparagine; by host glycan is attached at Asn-455.

This sequence belongs to the glycosyl hydrolase 34 family. As to quaternary structure, homotetramer. It depends on Ca(2+) as a cofactor. In terms of processing, N-glycosylated.

The protein localises to the virion membrane. Its subcellular location is the host apical cell membrane. It carries out the reaction Hydrolysis of alpha-(2-&gt;3)-, alpha-(2-&gt;6)-, alpha-(2-&gt;8)- glycosidic linkages of terminal sialic acid residues in oligosaccharides, glycoproteins, glycolipids, colominic acid and synthetic substrates.. With respect to regulation, inhibited by the neuraminidase inhibitors zanamivir (Relenza) and oseltamivir (Tamiflu). These drugs interfere with the release of progeny virus from infected cells and are effective against all influenza strains. Resistance to neuraminidase inhibitors is quite rare. Functionally, catalyzes the removal of terminal sialic acid residues from viral and cellular glycoconjugates. Cleaves off the terminal sialic acids on the glycosylated HA during virus budding to facilitate virus release. Additionally helps virus spread through the circulation by further removing sialic acids from the cell surface. These cleavages prevent self-aggregation and ensure the efficient spread of the progeny virus from cell to cell. Otherwise, infection would be limited to one round of replication. Described as a receptor-destroying enzyme because it cleaves a terminal sialic acid from the cellular receptors. May facilitate viral invasion of the upper airways by cleaving the sialic acid moieties on the mucin of the airway epithelial cells. Likely to plays a role in the budding process through its association with lipid rafts during intracellular transport. May additionally display a raft-association independent effect on budding. Plays a role in the determination of host range restriction on replication and virulence. Sialidase activity in late endosome/lysosome traffic seems to enhance virus replication. The chain is Neuraminidase from Influenza A virus (strain A/Chile/1/1983 H1N1).